The chain runs to 251 residues: DNA repair protein RecO (251 aa).

Belongs to the RecO family.

In terms of biological role, involved in DNA repair and RecF pathway recombination. This chain is DNA repair protein RecO, found in Albidiferax ferrireducens (strain ATCC BAA-621 / DSM 15236 / T118) (Rhodoferax ferrireducens).